A 262-amino-acid chain; its full sequence is Acyl-[acyl-carrier-protein]--UDP-N-acetylglucosamine O-acyltransferase (262 aa).

The protein belongs to the transferase hexapeptide repeat family. LpxA subfamily. Homotrimer.

The protein resides in the cytoplasm. The enzyme catalyses a (3R)-hydroxyacyl-[ACP] + UDP-N-acetyl-alpha-D-glucosamine = a UDP-3-O-[(3R)-3-hydroxyacyl]-N-acetyl-alpha-D-glucosamine + holo-[ACP]. The protein operates within glycolipid biosynthesis; lipid IV(A) biosynthesis; lipid IV(A) from (3R)-3-hydroxytetradecanoyl-[acyl-carrier-protein] and UDP-N-acetyl-alpha-D-glucosamine: step 1/6. Its function is as follows. Involved in the biosynthesis of lipid A, a phosphorylated glycolipid that anchors the lipopolysaccharide to the outer membrane of the cell. The chain is Acyl-[acyl-carrier-protein]--UDP-N-acetylglucosamine O-acyltransferase from Photorhabdus laumondii subsp. laumondii (strain DSM 15139 / CIP 105565 / TT01) (Photorhabdus luminescens subsp. laumondii).